A 485-amino-acid polypeptide reads, in one-letter code: Glycogen synthase (485 aa).

Lys-15 contributes to the ADP-alpha-D-glucose binding site.

This sequence belongs to the glycosyltransferase 1 family. Bacterial/plant glycogen synthase subfamily.

The catalysed reaction is [(1-&gt;4)-alpha-D-glucosyl](n) + ADP-alpha-D-glucose = [(1-&gt;4)-alpha-D-glucosyl](n+1) + ADP + H(+). Its pathway is glycan biosynthesis; glycogen biosynthesis. Functionally, synthesizes alpha-1,4-glucan chains using ADP-glucose. The sequence is that of Glycogen synthase from Rhodospirillum rubrum (strain ATCC 11170 / ATH 1.1.1 / DSM 467 / LMG 4362 / NCIMB 8255 / S1).